We begin with the raw amino-acid sequence, 489 residues long: Membrane-bound acylglycerophosphatidylinositol O-acyltransferase frj (489 aa).

A run of 3 helical transmembrane segments spans residues 2-22 (SIDD…GSYV), 40-60 (VLVV…SLAL), and 75-95 (LVTF…DFYF). Active-site residues include N331 and H364. A run of 2 helical transmembrane segments spans residues 405 to 425 (VIFW…FLLS) and 433 to 453 (FYSS…ALGF).

The protein belongs to the membrane-bound acyltransferase family.

The protein localises to the membrane. The catalysed reaction is a 1-acyl-sn-glycero-3-phospho-(1D-myo-inositol) + (5Z,8Z,11Z,14Z)-eicosatetraenoyl-CoA = a 1-acyl-2-(5Z,8Z,11Z,14Z-eicosatetraenoyl)-sn-glycero-3-phospho-(1D-myo-inositol) + CoA. It carries out the reaction a 1-acyl-sn-glycero-3-phosphocholine + an acyl-CoA = a 1,2-diacyl-sn-glycero-3-phosphocholine + CoA. It catalyses the reaction (9Z)-hexadecenoyl-CoA + 1-hexadecanoyl-sn-glycero-3-phosphocholine = 1-hexadecanoyl-2-(9Z-hexadecenoyl)-sn-glycero-3-phosphocholine + CoA. The enzyme catalyses a 1-acyl-sn-glycero-3-phospho-L-serine + an acyl-CoA = a 1,2-diacyl-sn-glycero-3-phospho-L-serine + CoA. The catalysed reaction is 1-(9Z-octadecenoyl)-sn-glycero-3-phospho-L-serine + (9Z)-hexadecenoyl-CoA = 1-(9Z-octadecenoyl)-2-(9Z-hexadecenoyl)-sn-glycero-3-phospho-L-serine + CoA. It carries out the reaction a 1-acyl-sn-glycero-3-phosphoethanolamine + an acyl-CoA = a 1,2-diacyl-sn-glycero-3-phosphoethanolamine + CoA. It catalyses the reaction 1-hexadecanoyl-sn-glycero-3-phosphoethanolamine + (9Z)-hexadecenoyl-CoA = 1-hexadecanoyl-2-(9Z)-hexadecenoyl-sn-glycero-3-phosphoethanolamine + CoA. The protein operates within lipid metabolism; phospholipid metabolism. Functionally, acyltransferase that mediates the acylation of lysophospholipids to produce phospholipids (glycerophospholipids). Highest activity with lysophosphatidylinositol (1-acyl-sn-glycero-3-phospho-(1D-myo-inositol) or LPI) producing phosphatidylinositol (1,2-diacyl-sn-glycero-3-phospho-(1D-myo-inositol) or PI) (LPIAT activity), but also converts lysophosphatidylcholine (1-acyl-sn-glycero-3-phosphocholine or LPC) to phosphatidylcholine (1,2-diacyl-sn-glycero-3-phosphocholine or PC) (LPCAT activity), lysophosphatidylserine (1-acyl-2-hydroxy-sn-glycero-3-phospho-L-serine or LPS) to phosphatidylserine (1,2-diacyl-sn-glycero-3-phospho-L-serine or PS) (LPSAT activity), and lysophosphatidylethanolamine (1-acyl-sn-glycero-3-phosphoethanolamine or LPE) producing phosphatidylethanolamine (1,2-diacyl-sn-glycero-3-phosphoethanolamine or PE) (LPEAT activity). Has a preference for unsaturated fatty acid arachidonoyl-CoA ((5Z,8Z,11Z,14Z)-eicosatetraenoyl-CoA). Glycerophospholipids are important structural and functional components of cellular membrane, acyl-chain remodeling regulates the molecular species distribution of glycerophospholipids which can affect membrane fluidity and curvature. In Drosophila melanogaster (Fruit fly), this protein is Membrane-bound acylglycerophosphatidylinositol O-acyltransferase frj.